Consider the following 461-residue polypeptide: Photosystem II CP43 reaction center protein (461 aa).

Residues 1 to 2 (ME) constitute a propeptide that is removed on maturation. N-acetylthreonine is present on Thr3. The residue at position 3 (Thr3) is a Phosphothreonine. The next 5 membrane-spanning stretches (helical) occupy residues 57–81 (LFEVAHFIPEKPMYEQGLILLPHLA), 122–143 (LIGPETLEESFPFFGYVWKDKN), 166–188 (KAMYFGGLFDPWSVGGGDVRVIT), 243–263 (KPWAWARRAFVWSGEAYLSYS), and 279–300 (WFNNTVYPSEFYGPTGPEASQS). Residue Glu355 coordinates [CaMn4O5] cluster. A helical membrane pass occupies residues 435 to 459 (RARAAAAGFEKGIDRDNEPVLSMKP).

The protein belongs to the PsbB/PsbC family. PsbC subfamily. In terms of assembly, PSII is composed of 1 copy each of membrane proteins PsbA, PsbB, PsbC, PsbD, PsbE, PsbF, PsbH, PsbI, PsbJ, PsbK, PsbL, PsbM, PsbT, PsbX, PsbY, PsbZ, Psb30/Ycf12, at least 3 peripheral proteins of the oxygen-evolving complex and a large number of cofactors. It forms dimeric complexes. It depends on Binds multiple chlorophylls and provides some of the ligands for the Ca-4Mn-5O cluster of the oxygen-evolving complex. It may also provide a ligand for a Cl- that is required for oxygen evolution. PSII binds additional chlorophylls, carotenoids and specific lipids. as a cofactor.

It localises to the plastid. The protein localises to the chloroplast thylakoid membrane. In terms of biological role, one of the components of the core complex of photosystem II (PSII). It binds chlorophyll and helps catalyze the primary light-induced photochemical processes of PSII. PSII is a light-driven water:plastoquinone oxidoreductase, using light energy to abstract electrons from H(2)O, generating O(2) and a proton gradient subsequently used for ATP formation. This chain is Photosystem II CP43 reaction center protein, found in Tupiella akineta (Green alga).